A 369-amino-acid chain; its full sequence is Cytoplasmic tRNA 2-thiolation protein 1 (369 aa).

It belongs to the TtcA family. CTU1/NCS6/ATPBD3 subfamily.

Its subcellular location is the cytoplasm. It functions in the pathway tRNA modification; 5-methoxycarbonylmethyl-2-thiouridine-tRNA biosynthesis. Its function is as follows. Plays a central role in 2-thiolation of mcm(5)S(2)U at tRNA wobble positions of tRNA(Lys), tRNA(Glu) and tRNA(Gln). Directly binds tRNAs and probably acts by catalyzing adenylation of tRNAs, an intermediate required for 2-thiolation. It is unclear whether it acts as a sulfurtransferase that transfers sulfur from thiocarboxylated URM1 onto the uridine of tRNAs at wobble position. Prior mcm(5) tRNA modification by the elongator complex is required for 2-thiolation. May also be involved in protein urmylation. This is Cytoplasmic tRNA 2-thiolation protein 1 from Meyerozyma guilliermondii (strain ATCC 6260 / CBS 566 / DSM 6381 / JCM 1539 / NBRC 10279 / NRRL Y-324) (Yeast).